Consider the following 499-residue polypeptide: Chaperone SurA (499 aa).

An N-terminal signal peptide occupies residues 1–36; sequence MKRQEFALFSLTLMLSPWRRVLLPAVLAAMAGPALA. PpiC domains lie at 231 to 333 and 352 to 450; these read PTEF…KLTA and ITQT…QVEN.

The protein localises to the periplasm. The enzyme catalyses [protein]-peptidylproline (omega=180) = [protein]-peptidylproline (omega=0). Its function is as follows. Chaperone involved in the correct folding and assembly of outer membrane proteins. Recognizes specific patterns of aromatic residues and the orientation of their side chains, which are found more frequently in integral outer membrane proteins. May act in both early periplasmic and late outer membrane-associated steps of protein maturation. This is Chaperone SurA from Cupriavidus pinatubonensis (strain JMP 134 / LMG 1197) (Cupriavidus necator (strain JMP 134)).